Consider the following 475-residue polypeptide: Splicing factor U2AF 65 kDa subunit (475 aa).

The interval 1–90 (MSDFDEFERQ…RHEKKKKVRK (90 aa)) is disordered. Position 2 is an N-acetylserine (Ser2). Phosphoserine is present on Ser2. Residues 2-93 (SDFDEFERQL…KKKKVRKYWD (92 aa)) are required for interaction with PRPF19. Residues 7–22 (FERQLNENKQERDKEN) show a composition bias toward basic and acidic residues. Lys15 is subject to 5-hydroxylysine; by JMJD6; alternate. Lys15 is covalently cross-linked (Glycyl lysine isopeptide (Lys-Gly) (interchain with G-Cter in SUMO2); alternate). Residues 17 to 47 (ERDKENRHRKRSHSRSRSRDRKRRSRSRDRR) form a necessary and sufficient to stimulate pre-mRNAs 3'-end cleavage in a CFIm complex-dependent manner region. Residues 23 to 46 (RHRKRSHSRSRSRDRKRRSRSRDR) are compositionally biased toward basic residues. Positions 47–56 (RNRDQRSASR) are enriched in basic and acidic residues. Lys70 participates in a covalent cross-link: Glycyl lysine isopeptide (Lys-Gly) (interchain with G-Cter in SUMO2); alternate. Residue Lys70 is modified to N6-acetyllysine; alternate. Ser79 is modified (phosphoserine). The segment covering 79-89 (SPRHEKKKKVR) has biased composition (basic residues). RRM domains follow at residues 149-231 (RRLY…RPHD), 259-337 (HKLF…RASV), and 385-466 (LPEE…YCDP). Lys276 carries the 5-hydroxylysine; by JMJD6 modification. Ser294 bears the Phosphoserine mark.

It belongs to the splicing factor SR family. In terms of assembly, interacts with U2AF1L4. Heterodimer with U2AF1. Binds unphosphorylated SF1. Interacts with SCAF11 and SNW1. Interacts with ZRSR2/U2AF1-RS2. Interacts with RBM17. Interacts with PRPF19; the interaction is direct. Interacts with POLR2A (via the C-terminal domain); Interacts with PRPF19; the interaction is direct. Interacts with POLR2A (via the C-terminal domain); recruits PRPF19 and the Prp19 complex to the pre-mRNA. Interacts with KHDC4 (Isoform 2). Interacts with ZRSR2. Interacts with the SF3B complex composed of SF3B1, SF3B2, SF3B3, SF3B4, SF3B5, SF3B6 and PHF5A. Interacts (via N-terminus) with CPSF7 (via C-terminus); this interaction stimulates pre-mRNA 3'-end processing by promoting the recruitment of the CFIm complex to cleavage and polyadenylation signals. Interacts with ARGLU1; interaction may be involved in ARGLU1-mediated modulation of alternative splicing. Post-translationally, lysyl-hydroxylation at Lys-15 and Lys-276 affects the mRNA splicing activity of the protein, leading to regulate some, but not all, alternative splicing events.

It localises to the nucleus. Its function is as follows. Plays a role in pre-mRNA splicing and 3'-end processing. By recruiting PRPF19 and the PRP19C/Prp19 complex/NTC/Nineteen complex to the RNA polymerase II C-terminal domain (CTD), and thereby pre-mRNA, may couple transcription to splicing. Required for the export of mRNA out of the nucleus, even if the mRNA is encoded by an intron-less gene. Positively regulates pre-mRNA 3'-end processing by recruiting the CFIm complex to cleavage and polyadenylation signals. This chain is Splicing factor U2AF 65 kDa subunit (U2af2), found in Mus musculus (Mouse).